Consider the following 485-residue polypeptide: Glucagon receptor (485 aa).

A signal peptide spans 1–26 (MPLTQLHCPHLLLLLLVLSCLPEAPS). At 27–137 (AQVMDFLFEK…EIEVQKGVAK (111 aa)) the chain is on the extracellular side. 3 disulfide bridges follow: Cys44/Cys68, Cys59/Cys101, and Cys82/Cys122. 5 N-linked (GlcNAc...) asparagine glycosylation sites follow: Asn47, Asn60, Asn75, Asn79, and Asn118. Residues 138–162 (MYSSQQVMYTVGYSLSLGALLLALV) traverse the membrane as a helical segment. Over 163–174 (ILLGLRKLHCTR) the chain is Cytoplasmic. The chain crosses the membrane as a helical span at residues 175–199 (NYIHGNLFASFVLKAGSVLVIDWLL). Topologically, residues 200 to 226 (KTRYSQKIGDDLSVSVWLSDGAMAGCR) are extracellular. The cysteines at positions 225 and 295 are disulfide-linked. The chain crosses the membrane as a helical span at residues 227 to 250 (VATVIMQYGIIANYCWLLVEGVYL). Residues 251–264 (YSLLSLATFSERSF) lie on the Cytoplasmic side of the membrane. Residues 265–286 (FSLYLGIGWGAPLLFVIPWVVV) traverse the membrane as a helical segment. The Extracellular portion of the chain corresponds to 287–304 (KCLFENVQCWTSNDNMGF). A helical transmembrane segment spans residues 305-327 (WWILRIPVFLALLINFFIFVHII). Residues 328–351 (HLLVAKLRAHQMHYADYKFRLARS) are Cytoplasmic-facing. The tract at residues 351–354 (STLT) is important for allosteric inhibitor binding. A helical membrane pass occupies residues 352 to 370 (TLTLIPLLGVHEVVFAFVT). The Extracellular portion of the chain corresponds to 371 to 382 (DEHAQGTLRSTK). Residues 383–403 (LFFDLFLSSFQGLLVAVLYCF) form a helical membrane-spanning segment. The Cytoplasmic segment spans residues 404–485 (LNKEVQAELM…SLPRLADSPT (82 aa)). Positions 457–475 (AGSSSGTGCVPSMETSLAS) are enriched in polar residues. Residues 457–485 (AGSSSGTGCVPSMETSLASSLPRLADSPT) form a disordered region. Residues Ser460 and Ser476 each carry the phosphoserine modification.

Belongs to the G-protein coupled receptor 2 family. In terms of processing, ligand-binding promotes phosphorylation of serine residues in the C-terminal cytoplasmic domain. Phosphorylation is important for receptor endocytosis after ligand-binding. Expressed predominantly in liver, kidney, adrenal, lung and stomach, while lower levels of expression are detected in brown and white adipose tissue, cerebellum, duodenum and heart.

Its subcellular location is the cell membrane. Its function is as follows. G-protein coupled receptor for glucagon that plays a central role in the regulation of blood glucose levels and glucose homeostasis. Regulates the rate of hepatic glucose production by promoting glycogen hydrolysis and gluconeogenesis. Plays an important role in mediating the responses to fasting. Ligand binding causes a conformation change that triggers signaling via guanine nucleotide-binding proteins (G proteins) and modulates the activity of down-stream effectors, such as adenylate cyclase. Promotes activation of adenylate cyclase. Besides, plays a role in signaling via a phosphatidylinositol-calcium second messenger system. In Mus musculus (Mouse), this protein is Glucagon receptor (Gcgr).